A 415-amino-acid chain; its full sequence is Serine--tRNA ligase (415 aa).

An L-serine-binding site is contributed by 231-233 (TAE). 262–264 (RSE) serves as a coordination point for ATP. Glu-285 provides a ligand contact to L-serine. Position 349–352 (349–352 (EISS)) interacts with ATP. Ser-383 is a binding site for L-serine.

Belongs to the class-II aminoacyl-tRNA synthetase family. Type-1 seryl-tRNA synthetase subfamily. As to quaternary structure, homodimer. The tRNA molecule binds across the dimer.

The protein resides in the cytoplasm. It carries out the reaction tRNA(Ser) + L-serine + ATP = L-seryl-tRNA(Ser) + AMP + diphosphate + H(+). The enzyme catalyses tRNA(Sec) + L-serine + ATP = L-seryl-tRNA(Sec) + AMP + diphosphate + H(+). The protein operates within aminoacyl-tRNA biosynthesis; selenocysteinyl-tRNA(Sec) biosynthesis; L-seryl-tRNA(Sec) from L-serine and tRNA(Sec): step 1/1. Catalyzes the attachment of serine to tRNA(Ser). Is also able to aminoacylate tRNA(Sec) with serine, to form the misacylated tRNA L-seryl-tRNA(Sec), which will be further converted into selenocysteinyl-tRNA(Sec). This Helicobacter pylori (strain Shi470) protein is Serine--tRNA ligase.